Reading from the N-terminus, the 158-residue chain is AP-1 complex subunit sigma-1A (158 aa).

Ser-147 is subject to Phosphoserine.

It belongs to the adaptor complexes small subunit family. As to quaternary structure, adaptor protein complex 1 (AP-1) is a heterotetramer composed of two large adaptins (gamma-type subunit AP1G1 and beta-type subunit AP1B1), a medium adaptin (mu-type subunit AP1M1 or AP1M2) and a small adaptin (sigma-type subunit AP1S1 or AP1S2 or AP1S3). In terms of tissue distribution, widely expressed.

The protein localises to the golgi apparatus. Its subcellular location is the cytoplasmic vesicle membrane. It is found in the membrane. It localises to the clathrin-coated pit. Functionally, subunit of clathrin-associated adaptor protein complex 1 that plays a role in protein sorting in the late-Golgi/trans-Golgi network (TGN) and/or endosomes. The AP complexes mediate both the recruitment of clathrin to membranes and the recognition of sorting signals within the cytosolic tails of transmembrane cargo molecules. This is AP-1 complex subunit sigma-1A (AP1S1) from Homo sapiens (Human).